The primary structure comprises 27 residues: Protein YqiM (27 aa).

In Escherichia coli (strain K12), this protein is Protein YqiM.